A 246-amino-acid polypeptide reads, in one-letter code: NAD-dependent protein deacetylase (246 aa).

Residues 1-246 enclose the Deacetylase sirtuin-type domain; that stretch reads MKKPDIQQLK…VIEEIVNSNS (246 aa). 7 residues coordinate NAD(+): A25, F36, R37, Q106, I108, D109, and H124. Residue F36 participates in nicotinamide binding. Residues I108 and D109 each contribute to the nicotinamide site. Catalysis depends on H124, which acts as the Proton acceptor. Zn(2+) contacts are provided by C132, C135, C152, and C155. Residues S193, S194, N216, and D233 each coordinate NAD(+).

It belongs to the sirtuin family. Class U subfamily. Zn(2+) is required as a cofactor.

It is found in the cytoplasm. The catalysed reaction is N(6)-acetyl-L-lysyl-[protein] + NAD(+) + H2O = 2''-O-acetyl-ADP-D-ribose + nicotinamide + L-lysyl-[protein]. NAD-dependent protein deacetylase which modulates the activities of several enzymes which are inactive in their acetylated form. This is NAD-dependent protein deacetylase from Staphylococcus epidermidis (strain ATCC 35984 / DSM 28319 / BCRC 17069 / CCUG 31568 / BM 3577 / RP62A).